The sequence spans 721 residues: MPRSSEAGYCCLSRDSNMPDSRDDQQQGASMGTSPDNSQTSSLIDGRTLSKESPSHGLELSAPEKARAASLDASEEALWTTRADGRVRLRLEPFCTQLPYTVHQMFYEALDKYGNLSALGFKRKDKWERISYYQYYLIARKVAKGFLKLGLERAHSVAILGFNSPEWFFSAVGTVFAGGIVTGIYTTSSPEACQYIAHDCRANVIVVDTQKQLEKILKIWKDLPHLKAVVIYQEPPPKKMANVYTMEELIELGQEVPEEALDAIIDTQQPNQCCVLVYTSGTTGNPKGVMLSQDNITWTARYGSQAGDIQPAEVQQEVVVSYLPLSHIAAQIYDLWTGIQWGAQVCFADPDALKGTLVNTLREVEPTSHMGVPRVWEKIMERIQEVAAQSGFIRRKMLLWAMSVTLEQNLTCPSNDLKPFTSRLADYLVLARVRQALGFAKCQKNFYGAAPMTAETQRFFLGLNIRLYAGYGLSESTGPHFMSSPYNYRLYSSGRVVPGCRVKLVNQDADGIGEICLWGRTIFMGYLNMEDKTHEAIDSEGWLHTGDMGRLDDDGFLYITGRLKELIITAGGENVPPVPIEEAVKMELPIISSAMLIGDQRKFLSMLLTLKCTLNPETSEPTDNLTEQAVEFCQRVGSKASTVSEIVGQKDEAVYQAIHEGIQRVNANAAARPYHIQKWAILERDFSISGGELGPTMKLKRLTVLEKYKDIIDSFYQEQKQ.

Positions 1 to 64 (MPRSSEAGYC…SHGLELSAPE (64 aa)) are disordered. Over residues 26-43 (QQGASMGTSPDNSQTSSL) the composition is skewed to polar residues. Ser-34, Ser-50, Ser-53, and Ser-70 each carry phosphoserine. ATP-binding positions include 279-287 (TSGTTGNPK), 469-474 (AGYGLS), Asp-547, and Arg-562. The residue at position 655 (Tyr-655) is a Phosphotyrosine. Lys-698 is a binding site for ATP.

This sequence belongs to the ATP-dependent AMP-binding enzyme family. Bubblegum subfamily. As to expression, present in testis, at a lower level in brain, and at a very low level in ovary. Not detected in other tissues. tested. Present in Leydig cells of the adult testis and to a lesser degree in the seminiferous tubules in spermatogonia and Sertoli cells (at protein level).

Its subcellular location is the cytoplasm. It is found in the cytoplasmic vesicle. The protein resides in the microsome. The protein localises to the endoplasmic reticulum. It localises to the cell membrane. It carries out the reaction a long-chain fatty acid + ATP + CoA = a long-chain fatty acyl-CoA + AMP + diphosphate. It catalyses the reaction (E)-hexadec-2-enoate + ATP + CoA = (2E)-hexadecenoyl-CoA + AMP + diphosphate. The enzyme catalyses hexadecanoate + ATP + CoA = hexadecanoyl-CoA + AMP + diphosphate. Its function is as follows. Catalyzes the conversion of fatty acids such as long-chain and very long-chain fatty acids to their active form acyl-CoAs for both synthesis of cellular lipids, and degradation via beta-oxidation. Can activate diverse saturated, monosaturated and polyunsaturated fatty acids. This chain is Long-chain-fatty-acid--CoA ligase ACSBG1, found in Rattus norvegicus (Rat).